We begin with the raw amino-acid sequence, 470 residues long: L-seryl-tRNA(Sec) selenium transferase (470 aa).

Lys-294 carries the post-translational modification N6-(pyridoxal phosphate)lysine.

The protein belongs to the SelA family. It depends on pyridoxal 5'-phosphate as a cofactor.

Its subcellular location is the cytoplasm. It carries out the reaction L-seryl-tRNA(Sec) + selenophosphate + H(+) = L-selenocysteinyl-tRNA(Sec) + phosphate. It functions in the pathway aminoacyl-tRNA biosynthesis; selenocysteinyl-tRNA(Sec) biosynthesis; selenocysteinyl-tRNA(Sec) from L-seryl-tRNA(Sec) (bacterial route): step 1/1. In terms of biological role, converts seryl-tRNA(Sec) to selenocysteinyl-tRNA(Sec) required for selenoprotein biosynthesis. In Solidesulfovibrio magneticus (strain ATCC 700980 / DSM 13731 / RS-1) (Desulfovibrio magneticus), this protein is L-seryl-tRNA(Sec) selenium transferase.